The sequence spans 383 residues: NIPA-like protein 2 (383 aa).

2 N-linked (GlcNAc...) asparagine glycosylation sites follow: Asn-23 and Asn-33. Helical transmembrane passes span 46–66 (IHLFGVLLAILGNLVISISLN), 88–108 (VLWLSGVLLTALGETGNFAAY), 115–135 (LIAPLGCMSVTGSAIISVLFL), 144–164 (LLGMTLAFAGTYLLVNFAPNI), 177–197 (FVGWQFLVYVILEILVFCILL), 208–228 (IVVLLTLVALLASLTVISVKA), 243–263 (LTYAIFYIMLVIMIASCVFQV), 278–298 (VVPVNHVFFTTSAIIAGIIFY), and 306–326 (FLTVFIYLFGCFLSFLGVFLV). The interval 352–383 (DKVQPDSNGLSYGTLPDGGDSTRGQCGEKKES) is disordered.

Belongs to the NIPA family.

The protein resides in the membrane. In Mus musculus (Mouse), this protein is NIPA-like protein 2 (Nipal2).